A 234-amino-acid chain; its full sequence is Leucyl/phenylalanyl-tRNA--protein transferase (234 aa).

It belongs to the L/F-transferase family.

Its subcellular location is the cytoplasm. It catalyses the reaction N-terminal L-lysyl-[protein] + L-leucyl-tRNA(Leu) = N-terminal L-leucyl-L-lysyl-[protein] + tRNA(Leu) + H(+). It carries out the reaction N-terminal L-arginyl-[protein] + L-leucyl-tRNA(Leu) = N-terminal L-leucyl-L-arginyl-[protein] + tRNA(Leu) + H(+). The catalysed reaction is L-phenylalanyl-tRNA(Phe) + an N-terminal L-alpha-aminoacyl-[protein] = an N-terminal L-phenylalanyl-L-alpha-aminoacyl-[protein] + tRNA(Phe). Its function is as follows. Functions in the N-end rule pathway of protein degradation where it conjugates Leu, Phe and, less efficiently, Met from aminoacyl-tRNAs to the N-termini of proteins containing an N-terminal arginine or lysine. This is Leucyl/phenylalanyl-tRNA--protein transferase from Salmonella agona (strain SL483).